Consider the following 295-residue polypeptide: Small ribosomal subunit protein uS2 (295 aa).

A disordered region spans residues Lys263–Ala295. Residues Glu278–Ala295 show a composition bias toward basic and acidic residues.

This sequence belongs to the universal ribosomal protein uS2 family.

This Rickettsia peacockii (strain Rustic) protein is Small ribosomal subunit protein uS2.